A 101-amino-acid chain; its full sequence is Long chronological lifespan protein 1 (101 aa).

The first 17 residues, 1–17 (MKNAALCEALPLLATCS), serve as a signal peptide directing secretion. S81 is lipidated: GPI-anchor amidated serine. Positions 82-101 (FAKPSFSFFFFLLTSLLSPF) are cleaved as a propeptide — removed in mature form.

It localises to the cell membrane. This is Long chronological lifespan protein 1 (LCL1) from Saccharomyces cerevisiae (strain ATCC 204508 / S288c) (Baker's yeast).